The chain runs to 889 residues: Alanine--tRNA ligase (889 aa).

Zn(2+) contacts are provided by H569, H573, C671, and H675.

This sequence belongs to the class-II aminoacyl-tRNA synthetase family. The cofactor is Zn(2+).

Its subcellular location is the cytoplasm. It catalyses the reaction tRNA(Ala) + L-alanine + ATP = L-alanyl-tRNA(Ala) + AMP + diphosphate. In terms of biological role, catalyzes the attachment of alanine to tRNA(Ala) in a two-step reaction: alanine is first activated by ATP to form Ala-AMP and then transferred to the acceptor end of tRNA(Ala). Also edits incorrectly charged Ser-tRNA(Ala) and Gly-tRNA(Ala) via its editing domain. In Synechococcus sp. (strain CC9605), this protein is Alanine--tRNA ligase.